A 173-amino-acid chain; its full sequence is MDAAKVRSEFDEKMMRYALELADKAEALGEIPVGAVLVDDARNIIGEGWNLSIVQSDPTAHAEIIALRNGAKNIQNYRLLNSTLYVTLEPCTMCAGAILHSRIKRLVFGASDYKTGAIGSRFHFFDDYKMNHTLEVTSGVLAEECSQKLSTFFQKRREEKKIEKALLKSLSDK.

Positions 9 to 121 (EFDEKMMRYA…DYKTGAIGSR (113 aa)) constitute a CMP/dCMP-type deaminase domain. Position 61 (His-61) interacts with Zn(2+). Catalysis depends on Glu-63, which acts as the Proton donor. The Zn(2+) site is built by Cys-91 and Cys-94.

This sequence belongs to the cytidine and deoxycytidylate deaminase family. In terms of assembly, homodimer. It depends on Zn(2+) as a cofactor.

It carries out the reaction adenosine(34) in tRNA + H2O + H(+) = inosine(34) in tRNA + NH4(+). In terms of biological role, catalyzes the deamination of adenosine to inosine at the wobble position 34 of tRNA(Arg2). In Haemophilus influenzae (strain ATCC 51907 / DSM 11121 / KW20 / Rd), this protein is tRNA-specific adenosine deaminase.